A 170-amino-acid polypeptide reads, in one-letter code: Large ribosomal subunit protein uL18c (170 aa).

A chloroplast-targeting transit peptide spans 1–63 (MLASPALAGA…QADRIARHVR (63 aa)).

It belongs to the universal ribosomal protein uL18 family. Part of the 50S ribosomal subunit; contacts the 5S rRNA.

The protein resides in the plastid. It localises to the chloroplast. Functionally, binds 5S rRNA, forms part of the central protuberance of the 50S subunit. The chain is Large ribosomal subunit protein uL18c (RPL18) from Oryza sativa subsp. japonica (Rice).